The primary structure comprises 325 residues: Pyruvate dehydrogenase E1 component subunit beta (325 aa).

Glu-60 contacts thiamine diphosphate.

In terms of assembly, heterodimer of an alpha and a beta chain. Thiamine diphosphate is required as a cofactor.

It localises to the cytoplasm. It is found in the secreted. The enzyme catalyses N(6)-[(R)-lipoyl]-L-lysyl-[protein] + pyruvate + H(+) = N(6)-[(R)-S(8)-acetyldihydrolipoyl]-L-lysyl-[protein] + CO2. Activity of the E1 module is inhibited by the pyruvate dehydrogenase inhibitor PdhI. Functionally, the pyruvate dehydrogenase complex catalyzes the overall conversion of pyruvate to acetyl-CoA and CO(2). It contains multiple copies of three enzymatic components: pyruvate dehydrogenase (E1), dihydrolipoamide acetyltransferase (E2) and lipoamide dehydrogenase (E3). The B.subtilis PDH complex also possesses branched-chain 2-oxoacid dehydrogenase (BCDH) activity. This Bacillus subtilis (strain 168) protein is Pyruvate dehydrogenase E1 component subunit beta.